Here is a 101-residue protein sequence, read N- to C-terminus: Small ribosomal subunit protein uS14 (101 aa).

Belongs to the universal ribosomal protein uS14 family. In terms of assembly, part of the 30S ribosomal subunit. Contacts proteins S3 and S10.

Its function is as follows. Binds 16S rRNA, required for the assembly of 30S particles and may also be responsible for determining the conformation of the 16S rRNA at the A site. This chain is Small ribosomal subunit protein uS14, found in Ectopseudomonas mendocina (strain ymp) (Pseudomonas mendocina).